The sequence spans 452 residues: Tripartite motif-containing protein 49 (452 aa).

The segment at cysteine 15–threonine 56 adopts an RING-type zinc-finger fold. The B box-type zinc finger occupies serine 88 to isoleucine 129. Zn(2+) contacts are provided by cysteine 93, histidine 96, cysteine 115, and histidine 121. The B30.2/SPRY domain maps to glutamate 269–phenylalanine 452.

This sequence belongs to the TRIM/RBCC family. As to expression, preferentially expressed in testis.

The chain is Tripartite motif-containing protein 49 (TRIM49) from Homo sapiens (Human).